Here is a 104-residue protein sequence, read N- to C-terminus: Large ribosomal subunit protein bL21 (104 aa).

Belongs to the bacterial ribosomal protein bL21 family. In terms of assembly, part of the 50S ribosomal subunit. Contacts protein L20.

Functionally, this protein binds to 23S rRNA in the presence of protein L20. The chain is Large ribosomal subunit protein bL21 from Salinispora tropica (strain ATCC BAA-916 / DSM 44818 / JCM 13857 / NBRC 105044 / CNB-440).